Consider the following 342-residue polypeptide: Holliday junction branch migration complex subunit RuvB (342 aa).

Residues 1–22 form a disordered region; it reads MTLKPVREVSPGSQEGEERLEQ. Positions 1–185 are large ATPase domain (RuvB-L); the sequence is MTLKPVREVS…FPIQERLGYY (185 aa). ATP-binding positions include L24, R25, G66, K69, T70, S71, 132 to 134, R175, Y185, and R222; that span reads EDY. Position 70 (T70) interacts with Mg(2+). Residues 186–256 form a small ATPAse domain (RuvB-S) region; sequence EPTELREIAV…IVETTLERLE (71 aa). Residues 259–342 form a head domain (RuvB-H) region; that stretch reads GRGLDAMDRR…RPQGKQGSLI (84 aa). Positions 295, 314, and 319 each coordinate DNA.

It belongs to the RuvB family. In terms of assembly, homohexamer. Forms an RuvA(8)-RuvB(12)-Holliday junction (HJ) complex. HJ DNA is sandwiched between 2 RuvA tetramers; dsDNA enters through RuvA and exits via RuvB. An RuvB hexamer assembles on each DNA strand where it exits the tetramer. Each RuvB hexamer is contacted by two RuvA subunits (via domain III) on 2 adjacent RuvB subunits; this complex drives branch migration. In the full resolvosome a probable DNA-RuvA(4)-RuvB(12)-RuvC(2) complex forms which resolves the HJ.

It is found in the cytoplasm. The catalysed reaction is ATP + H2O = ADP + phosphate + H(+). Functionally, the RuvA-RuvB-RuvC complex processes Holliday junction (HJ) DNA during genetic recombination and DNA repair, while the RuvA-RuvB complex plays an important role in the rescue of blocked DNA replication forks via replication fork reversal (RFR). RuvA specifically binds to HJ cruciform DNA, conferring on it an open structure. The RuvB hexamer acts as an ATP-dependent pump, pulling dsDNA into and through the RuvAB complex. RuvB forms 2 homohexamers on either side of HJ DNA bound by 1 or 2 RuvA tetramers; 4 subunits per hexamer contact DNA at a time. Coordinated motions by a converter formed by DNA-disengaged RuvB subunits stimulates ATP hydrolysis and nucleotide exchange. Immobilization of the converter enables RuvB to convert the ATP-contained energy into a lever motion, pulling 2 nucleotides of DNA out of the RuvA tetramer per ATP hydrolyzed, thus driving DNA branch migration. The RuvB motors rotate together with the DNA substrate, which together with the progressing nucleotide cycle form the mechanistic basis for DNA recombination by continuous HJ branch migration. Branch migration allows RuvC to scan DNA until it finds its consensus sequence, where it cleaves and resolves cruciform DNA. The protein is Holliday junction branch migration complex subunit RuvB of Anaeromyxobacter sp. (strain Fw109-5).